Reading from the N-terminus, the 397-residue chain is Acetyl-CoA acetyltransferase, cytosolic (397 aa).

Position 1 is an N-acetylmethionine (M1). Residue C92 is the Acyl-thioester intermediate of the active site. K200 bears the N6-acetyllysine mark. Residues R223 and S226 each contribute to the CoA site. An N6-acetyllysine mark is found at K233 and K235. S252 serves as a coordination point for CoA. The active-site Proton donor/acceptor is C383.

Belongs to the thiolase-like superfamily. Thiolase family. Homotetramer.

It localises to the cytoplasm. The protein localises to the cytosol. The enzyme catalyses 2 acetyl-CoA = acetoacetyl-CoA + CoA. It functions in the pathway lipid metabolism; fatty acid metabolism. Its function is as follows. Involved in the biosynthetic pathway of cholesterol. The polypeptide is Acetyl-CoA acetyltransferase, cytosolic (Acat2) (Rattus norvegicus (Rat)).